We begin with the raw amino-acid sequence, 385 residues long: Probable threonine protease PRSS50 (385 aa).

A signal peptide spans 1-39 (MGRWCQTVARGQRPRTSAPSRAGALLLLLLLLRSAGCWG). Positions 93–358 (VSEGKVDPYR…YQHWIWDCLN (266 aa)) constitute a Peptidase S1 domain. Residue asparagine 133 is glycosylated (N-linked (GlcNAc...) asparagine). Residues cysteine 138 and cysteine 154 are joined by a disulfide bond. Active-site charge relay system residues include histidine 153 and aspartate 206. 3 disulfide bridges follow: cysteine 240–cysteine 316, cysteine 273–cysteine 296, and cysteine 306–cysteine 334. Residue asparagine 279 is glycosylated (N-linked (GlcNAc...) asparagine). Residue threonine 310 is the Charge relay system of the active site.

Belongs to the peptidase S1 family. As to expression, testis specific. Differentially expressed in some breast cancer tissues.

It localises to the endoplasmic reticulum. In terms of biological role, may be involved in proteolysis through its threonine endopeptidase activity. In Homo sapiens (Human), this protein is Probable threonine protease PRSS50 (PRSS50).